The chain runs to 253 residues: Small ribosomal subunit protein uS2 (253 aa).

Ser2 carries the N-acetylserine modification. Positions 212–253 (QQAAEEAAAGEEDDEAKEEVAAEEQTEAADWAEGQSEEVASW) are disordered. The segment covering 219 to 238 (AAGEEDDEAKEEVAAEEQTE) has biased composition (acidic residues).

It belongs to the universal ribosomal protein uS2 family. As to quaternary structure, component of the small ribosomal subunit. Mature ribosomes consist of a small (40S) and a large (60S) subunit. The 40S subunit contains about 33 different proteins and 1 molecule of RNA (18S). The 60S subunit contains about 49 different proteins and 3 molecules of RNA (25S, 5.8S and 5S). Interacts with RPS21.

The protein resides in the cytoplasm. Functionally, required for the assembly and/or stability of the 40S ribosomal subunit. Required for the processing of the 20S rRNA-precursor to mature 18S rRNA in a late step of the maturation of 40S ribosomal subunits. This Eremothecium gossypii (strain ATCC 10895 / CBS 109.51 / FGSC 9923 / NRRL Y-1056) (Yeast) protein is Small ribosomal subunit protein uS2.